We begin with the raw amino-acid sequence, 350 residues long: Histidinol-phosphate aminotransferase (350 aa).

Lys-209 is subject to N6-(pyridoxal phosphate)lysine.

Belongs to the class-II pyridoxal-phosphate-dependent aminotransferase family. Histidinol-phosphate aminotransferase subfamily. Homodimer. Requires pyridoxal 5'-phosphate as cofactor.

It carries out the reaction L-histidinol phosphate + 2-oxoglutarate = 3-(imidazol-4-yl)-2-oxopropyl phosphate + L-glutamate. It functions in the pathway amino-acid biosynthesis; L-histidine biosynthesis; L-histidine from 5-phospho-alpha-D-ribose 1-diphosphate: step 7/9. This is Histidinol-phosphate aminotransferase from Geobacter sp. (strain M21).